The chain runs to 1409 residues: MKKTVFRLNFLTACVSLGIASQAWAGHTYFGIDYQYYRDFAENKGKFTVGAKNIEVYNKEGQLVGTSMTKAPMIDFSVVSRNGVAALVGDQYIVSVAHNGGYNDVDFGAEGRNPDQHRFTYQIVKRNNYQAWERKHPYDGDYHMPRLHKFVTEAEPVGMTTNMDGKVYADRENYPERVRIGSGRQYWRTDKDEETNVHSSYYVSGAYRYLTAGNTHTQSGNGNGTVNLSGNVVSPNHYGPLPTGGSKGDSGSPMFIYDAKKKQWLINAVLQTGHPFFGRGNGFQLIREEWFYNEVLAVDTPSVFQRYIPPINGHYSFVSNNDGTGKLTLTRPSKDGSKAKSEVGTVKLFNPSLNQTAKEHVKAAAGYNIYQPRMEYGKNIYLGDQGKGTLTIENNINQGAGGLYFEGNFVVKGKQNNITWQGAGVSIGQDATVEWKVHNPENDRLSKIGIGTLLVNGKGKNLGSLSAGNGKVILDQQADEAGQKQAFKEVGIVSGRATVQLNSTDQVDPNNIYFGFRGGRLDLNGHSLTFKRIQNTDEGAMIVNHNTTQVANITITGNESITAPSNKKNINKLDYSKEIAYNGWFGETDKNKHNGRLNLIYKPTTEDRTLLLSGGTNLKGDITQTKGKLFFSGRPTPHAYNHLDKRWSEMEGIPQGEIVWDYDWINRTFKAENFQIKGGSAVVSRNVSSIEGNWTVSNNANATFGVVPNQQNTICTRSDWTGLTTCKTVNLTDTKVINSIPITQINGSINLTNNATVNIHGLAKLNGNVTLIDHSQFTLSNNATQTGNIKLSNHANATVNNATLNGNVHLTDSAQFSLKNSHFWHQIQGDKDTTVTLENATWTMPSDTTLQNLTLNNSTVTLNSAYSASSNNAPRHRRSLETETTPTSAEHRFNTLTVNGKLSGQGTFQFTSSLFGYKSDKLKLSNDAEGDYTLSVRNTGKEPVTLEQLTLIESLDNKPLSDKLKFTLENDHVDAGALRYKLVKNKGEFRLHNPIKEQELLNDLVRAEQAEQTLEAKQVEQTAEKQKSKAKARSRRAVLSDTPSAQSLLNALEAKQVEQTTETQTSKPKTKKGRSKRALSAAFSDTPFDLSQLKVFEVKLEVINAQPQVKKEPQDQEEQGKQKELISRYSNSALSELSATVNSMFSVQDELDRLFVDQAQSALWTNIAQDKRRYDSDAFRAYQQKTNLRQIGVQKALDNGRIGAVFSHSRSDNTFDEQVKNHATLTMMSGFAQYQWGDLQFGVNVGAGISASKMAEEQSRKIHRKAINYGVNASYQFRLGQLGIQPYLGVNRYFIERENYQSEEVKVQTPSLAFNRYNAGIRVDYTFTPTNNISVKPYFFVNYVDVSNANVQTTVNSTMLQQSFGRYWQKEVGLKAEILHFQLSAFISKSQGSQLGKQQNVGVKLGYRW.

The first 25 residues, 1–25 (MKKTVFRLNFLTACVSLGIASQAWA), serve as a signal peptide directing secretion. The Peptidase S6 domain occupies 26-294 (GHTYFGIDYQ…LIREEWFYNE (269 aa)). Residue S250 is part of the active site. Disordered regions lie at residues 866–888 (YSAS…TPTS) and 1016–1078 (AKQV…SKRA). Positions 1057 to 1067 (VEQTTETQTSK) are enriched in polar residues. Residues 1068–1077 (PKTKKGRSKR) show a composition bias toward basic residues. The 254-residue stretch at 1156 to 1409 (VDQAQSALWT…NVGVKLGYRW (254 aa)) folds into the Autotransporter domain.

Its subcellular location is the periplasm. It localises to the secreted. The protein localises to the cell surface. It is found in the cell outer membrane. Its function is as follows. Probable protease; promotes adherence and invasion by directly binding to a host cell structure. In Haemophilus influenzae (strain ATCC 51907 / DSM 11121 / KW20 / Rd), this protein is Adhesion and penetration protein autotransporter (hap).